Reading from the N-terminus, the 451-residue chain is Tubulin alpha-1B chain (451 aa).

The short motif at 1-4 (MREC) is the MREC motif element. GTP is bound by residues glycine 10, glutamine 11, alanine 12, and glutamine 15. At lysine 40 the chain carries N6,N6,N6-trimethyllysine; alternate. Lysine 40 carries the N6-acetyllysine; alternate modification. Phosphoserine is present on serine 48. Residues glutamate 71, alanine 99, serine 140, glycine 143, glycine 144, threonine 145, glycine 146, threonine 179, glutamate 183, asparagine 206, tyrosine 224, and asparagine 228 each contribute to the GTP site. Residue glutamate 71 coordinates Mg(2+). Serine 232 is subject to Phosphoserine. GTP is bound at residue leucine 252. Glutamate 254 is an active-site residue. Tyrosine 282 is modified (3'-nitrotyrosine). Lysine 326 participates in a covalent cross-link: Glycyl lysine isopeptide (Lys-Gly) (interchain with G-Cter in ubiquitin). Arginine 339 carries the omega-N-methylarginine modification. A Glycyl lysine isopeptide (Lys-Gly) (interchain with G-Cter in ubiquitin) cross-link involves residue lysine 370. Serine 439 is subject to Phosphoserine. 5-glutamyl polyglutamate occurs at positions 443 and 445. Tyrosine 451 bears the 3'-nitrotyrosine mark.

The protein belongs to the tubulin family. Heterodimer of alpha- and beta-tubulin. A typical microtubule is a hollow water-filled tube with an outer diameter of 25 nm and an inner diameter of 15 nM. Alpha-beta heterodimers associate head-to-tail to form protofilaments running lengthwise along the microtubule wall with the beta-tubulin subunit facing the microtubule plus end conferring a structural polarity. Microtubules usually have 13 protofilaments but different protofilament numbers can be found in some organisms and specialized cells. Interacts with gamma-tubulin; the interaction allows microtubules to nucleate from the gamma-tubulin ring complex (gTuRC). Nascent microtubule interacts (via alpha-tubulin MREC motif) with TTC5/STRAP; this interaction may result in tubulin mRNA-targeted degradation. Component of sperm flagellar doublet microtubules. Mg(2+) is required as a cofactor. In terms of processing, some glutamate residues at the C-terminus are polyglycylated, resulting in polyglycine chains on the gamma-carboxyl group. Glycylation is mainly limited to tubulin incorporated into axonemes (cilia and flagella) whereas glutamylation is prevalent in neuronal cells, centrioles, axonemes, and the mitotic spindle. Both modifications can coexist on the same protein on adjacent residues, and lowering polyglycylation levels increases polyglutamylation, and reciprocally. Cilia and flagella glycylation is required for their stability and maintenance. Flagella glycylation controls sperm motility. Some glutamate residues at the C-terminus are polyglutamylated, resulting in polyglutamate chains on the gamma-carboxyl group. Polyglutamylation plays a key role in microtubule severing by spastin (SPAST). SPAST preferentially recognizes and acts on microtubules decorated with short polyglutamate tails: severing activity by SPAST increases as the number of glutamates per tubulin rises from one to eight, but decreases beyond this glutamylation threshold. Glutamylation is also involved in cilia motility. Post-translationally, acetylation of alpha chains at Lys-40 is located inside the microtubule lumen. This modification has been correlated with increased microtubule stability, intracellular transport and ciliary assembly. In terms of processing, methylation of alpha chains at Lys-40 is found in mitotic microtubules and is required for normal mitosis and cytokinesis contributing to genomic stability. Nitration of Tyr-451 is irreversible and interferes with normal dynein intracellular distribution. Post-translationally, undergoes a tyrosination/detyrosination cycle, the cyclic removal and re-addition of a C-terminal tyrosine residue by the enzymes tubulin tyrosine carboxypeptidase (MATCAP1, VASH1 or VASH2) and tubulin tyrosine ligase (TTL), respectively. In terms of processing, tyrosination promotes microtubule interaction with CAP-Gly domain-containing proteins such as CLIP1, CLIP2 and DCTN1. Tyrosination regulates the initiation of dynein-dynactin motility via interaction with DCTN1, which brings the dynein-dynactin complex into contact with microtubules. In neurons, tyrosinated tubulins mediate the initiation of retrograde vesicle transport. Detyrosination is involved in metaphase plate congression by guiding chromosomes during mitosis: detyrosination promotes interaction with CENPE, promoting pole-proximal transport of chromosomes toward the equator. Detyrosination increases microtubules-dependent mechanotransduction in dystrophic cardiac and skeletal muscle. In cardiomyocytes, detyrosinated microtubules are required to resist to contractile compression during contraction: detyrosination promotes association with desmin (DES) at force-generating sarcomeres, leading to buckled microtubules and mechanical resistance to contraction.

Its subcellular location is the cytoplasm. It localises to the cytoskeleton. It catalyses the reaction GTP + H2O = GDP + phosphate + H(+). Tubulin is the major constituent of microtubules, protein filaments consisting of alpha- and beta-tubulin heterodimers. Microtubules grow by the addition of GTP-tubulin dimers to the microtubule end, where a stabilizing cap forms. Below the cap, tubulin dimers are in GDP-bound state, owing to GTPase activity of alpha-tubulin. This Pan troglodytes (Chimpanzee) protein is Tubulin alpha-1B chain (TUBA1B).